Consider the following 213-residue polypeptide: MRQNVLFEFGTPIVRVLNALDALSNGRGILVVDDENRENEGDMIFAAENMTVKQMALAIRYGSGIVCLCLTEEKCRQLKLPMMVKNNSNHYKTAFTVTIEASKGITTGVSAKDRLTTIKTSIEDYAKPSDLNRPGHVFPLRAHNGGVLSRSGHTEAAVDLTTLAGLKPFGVICEVTNEDGSMARTTEIIKFSKQYDMPVLTISDVIAYRMSNL.

Residues arginine 37–glutamate 38, aspartate 42, arginine 150–threonine 154, and glutamate 174 each bind D-ribulose 5-phosphate. Residue glutamate 38 participates in Mg(2+) binding. Histidine 153 contacts Mg(2+).

This sequence belongs to the DHBP synthase family. In terms of assembly, homodimer. The cofactor is Mg(2+). Mn(2+) is required as a cofactor.

It catalyses the reaction D-ribulose 5-phosphate = (2S)-2-hydroxy-3-oxobutyl phosphate + formate + H(+). Its pathway is cofactor biosynthesis; riboflavin biosynthesis; 2-hydroxy-3-oxobutyl phosphate from D-ribulose 5-phosphate: step 1/1. Catalyzes the conversion of D-ribulose 5-phosphate to formate and 3,4-dihydroxy-2-butanone 4-phosphate. The polypeptide is 3,4-dihydroxy-2-butanone 4-phosphate synthase (Blochmanniella floridana).